Here is a 673-residue protein sequence, read N- to C-terminus: uncharacterized protein (673 aa).

Positions 1 to 95 (MLNGEKSALG…QSSAIADSIG (95 aa)) are disordered. Positions 13–40 (PSNSNSSSKLNAKSPNFIPSSSNIPRSS) are enriched in low complexity. Positions 42 to 60 (KTKEHSADRKPHRNSEKKT) are enriched in basic and acidic residues. Residues 214–273 (CPFCLEEKPVAARMSRCGHVYCFSCLLRFVETPTAAEVKAAETSGTKIVKCGHRSCPICW) form an RING-type zinc finger. The segment at 649–673 (SAPSKNSKNKKKKKLVLLSTGAAHR) is disordered.

Its subcellular location is the cytoplasm. It localises to the nucleus. This is an uncharacterized protein from Schizosaccharomyces pombe (strain 972 / ATCC 24843) (Fission yeast).